The following is a 182-amino-acid chain: Unknown protein 1 (182 aa).

In Helianthus annuus (Common sunflower), this protein is Unknown protein 1.